Consider the following 404-residue polypeptide: Cytoplasmic tRNA 2-thiolation protein 2 (404 aa).

It belongs to the CTU2/NCS2 family.

The protein resides in the cytoplasm. It participates in tRNA modification; 5-methoxycarbonylmethyl-2-thiouridine-tRNA biosynthesis. Its function is as follows. Plays a central role in 2-thiolation of mcm(5)S(2)U at tRNA wobble positions of tRNA(Lys), tRNA(Glu) and tRNA(Gln). May act by forming a heterodimer with NCS6/CTU1 that ligates sulfur from thiocarboxylated URM1 onto the uridine of tRNAs at wobble position. The protein is Cytoplasmic tRNA 2-thiolation protein 2 of Drosophila yakuba (Fruit fly).